Consider the following 335-residue polypeptide: Dolichyl-diphosphooligosaccharide--protein glycosyltransferase subunit MAGT1 (335 aa).

Positions 1 to 29 (MASPRWLWCVCATAAVTLLLVSKVPSASA) are cleaved as a signal peptide. The Extracellular portion of the chain corresponds to 30 to 184 (QRKKEKVLVE…DVNIRVIRPP (155 aa)). The Thioredoxin domain maps to 47-175 (WTNQRPVIRM…IARWIADRTD (129 aa)). Asparagine 71 carries N-linked (GlcNAc...) asparagine glycosylation. Cysteine 87 and cysteine 90 are oxidised to a cystine. Residues 185–205 (NYAGPLMLGLLLAVIGGLVYL) form a helical membrane-spanning segment. The Cytoplasmic portion of the chain corresponds to 206-209 (RRSN). The helical transmembrane segment at 210 to 230 (MEFLFNKTGWAFAALCFVLAM) threads the bilayer. Residues 231–270 (TSGQMWNHIRGPPYAHKNPHTGHVNYIHGSSQAQFVAETH) are Extracellular-facing. Residues 271–291 (IVLLFNGGVTLGMVLLCEAAA) form a helical membrane-spanning segment. The Cytoplasmic segment spans residues 292 to 300 (SDMDIGKRR). Residues 301 to 321 (MMCIAGIGLVVLFFSWMLSIF) traverse the membrane as a helical segment. At 322-335 (RSKYHGYPYSFLMS) the chain is on the extracellular side.

This sequence belongs to the OST3/OST6 family. As to quaternary structure, accessory component of the STT3B-containing form of the oligosaccharyltransferase (OST) complex. OST exists in two different complex forms which contain common core subunits RPN1, RPN2, OST48, OST4, DAD1 and TMEM258, either STT3A or STT3B as catalytic subunits, and form-specific accessory subunits. OST can form stable complexes with the Sec61 complex or with both the Sec61 and TRAP complexes. The association of TUSC3 or MAGT1 with the STT3B-containing complex seems to be mutually exclusvice.

The protein resides in the cell membrane. It is found in the endoplasmic reticulum. Its subcellular location is the endoplasmic reticulum membrane. Its pathway is protein modification; protein glycosylation. Its function is as follows. Accessory component of the STT3B-containing form of the N-oligosaccharyl transferase (OST) complex which catalyzes the transfer of a high mannose oligosaccharide from a lipid-linked oligosaccharide donor to an asparagine residue within an Asn-X-Ser/Thr consensus motif in nascent polypeptide chains. Involved in N-glycosylation of STT3B-dependent substrates. Specifically required for the glycosylation of a subset of acceptor sites that are near cysteine residues; in this function seems to act redundantly with TUSC3. In its oxidized form proposed to form transient mixed disulfides with a glycoprotein substrate to facilitate access of STT3B to the unmodified acceptor site. Also has oxidoreductase-independent functions in the STT3B-containing OST complex possibly involving substrate recognition. Could indirectly play a role in Mg(2+) transport in epithelial cells. This is Dolichyl-diphosphooligosaccharide--protein glycosyltransferase subunit MAGT1 from Rattus norvegicus (Rat).